Consider the following 404-residue polypeptide: Probable protein phosphatase 1N (404 aa).

In terms of domain architecture, PPM-type phosphatase spans 59–319; that stretch reads RFGASAVQGW…DNMTCMVVCF (261 aa). 4 residues coordinate Mn(2+): Asp96, Gly97, Asp267, and Asp310.

Belongs to the PP2C family. The cofactor is Mg(2+). Mn(2+) serves as cofactor.

It catalyses the reaction O-phospho-L-seryl-[protein] + H2O = L-seryl-[protein] + phosphate. The catalysed reaction is O-phospho-L-threonyl-[protein] + H2O = L-threonyl-[protein] + phosphate. This chain is Probable protein phosphatase 1N (Ppm1n), found in Mus musculus (Mouse).